Reading from the N-terminus, the 255-residue chain is tRNA pseudouridine synthase A (255 aa).

Aspartate 52 acts as the Nucleophile in catalysis. Tyrosine 111 provides a ligand contact to substrate.

This sequence belongs to the tRNA pseudouridine synthase TruA family. Homodimer.

The catalysed reaction is uridine(38/39/40) in tRNA = pseudouridine(38/39/40) in tRNA. Its function is as follows. Formation of pseudouridine at positions 38, 39 and 40 in the anticodon stem and loop of transfer RNAs. The sequence is that of tRNA pseudouridine synthase A from Nitrobacter winogradskyi (strain ATCC 25391 / DSM 10237 / CIP 104748 / NCIMB 11846 / Nb-255).